Reading from the N-terminus, the 501-residue chain is MSSPAQPAVPAPLADLKIQHTKIFINNEWHNSVSGKKFPVLNPATEEVICHVEEGDKADVDKAVKAARQAFQIGSPWRTMDASERGRLLNKLADLMERDRLLLATMEALNGGKVFANAYLSDLGGCIKALKYCAGWADKIHGQTIPSDGDIFTYTRREPIGVCGQIIPWNFPMLMFIWKIGPALSCGNTVVVKPAEQTPLTALHLASLIKEAGFPPGVVNIVPGYGPTAGAAISSHMDVDKVAFTGSTQVGKLIKEAAGKSNLKRVTLELGGKSPCIVFADADLDIAVEFAHHGVFYHQGQCCVAASRIFVEESVYDEFVKRSVERAKKYVLGNPLTPGINQGPQIDKEQHDKILDLIESGKKEGAKLECGGGRWGNKGFFVQPTVFSNVTDEMRIAKEEIFGPVQQIMKFKSVDDVIKRANNTTYGLAAGLFTKDLDKAITVSSALQAGVVWVNCYMMLSAQCPFGGFKMSGNGRELGEHGLYEYTELKTVAMKISQKNS.

Residue Ser2 is modified to N-acetylserine. 2 positions are modified to N6-acetyllysine: Lys91 and Lys128. NAD(+)-binding positions include 167-170, 193-196, 226-227, and 246-247; these read IPWN, KPAE, GP, and GS. At Lys252 the chain carries N6-acetyllysine. The active-site Proton acceptor is Glu269. 269-271 serves as a coordination point for NAD(+); that stretch reads ELG. Cys303 functions as the Nucleophile in the catalytic mechanism. A mediates interaction with PRMT3 region spans residues 336-501; it reads LTPGINQGPQ…VAMKISQKNS (166 aa). At Thr337 the chain carries Phosphothreonine. 349 to 353 serves as a coordination point for NAD(+); it reads EQHDK. Lys353 and Lys367 each carry N6-acetyllysine. 400–402 contacts NAD(+); sequence EIF. At Lys410 the chain carries N6-acetyllysine. Ser413 carries the post-translational modification Phosphoserine. N6-acetyllysine occurs at positions 419, 435, and 495.

It belongs to the aldehyde dehydrogenase family. In terms of assembly, homotetramer. Interacts with PRMT3; the interaction is direct, inhibits ALDH1A1 aldehyde dehydrogenase activity and is independent of the methyltransferase activity of PRMT3. Post-translationally, the N-terminus is blocked most probably by acetylation. Expressed in retina. Expressed in lens and cornea (at protein level). Expressed by midbrain dopamine neurons.

Its subcellular location is the cytoplasm. It is found in the cytosol. It localises to the cell projection. The protein localises to the axon. The enzyme catalyses an aldehyde + NAD(+) + H2O = a carboxylate + NADH + 2 H(+). It catalyses the reaction all-trans-retinal + NAD(+) + H2O = all-trans-retinoate + NADH + 2 H(+). It carries out the reaction 9-cis-retinal + NAD(+) + H2O = 9-cis-retinoate + NADH + 2 H(+). The catalysed reaction is 11-cis-retinal + NAD(+) + H2O = 11-cis-retinoate + NADH + 2 H(+). The enzyme catalyses 13-cis-retinal + NAD(+) + H2O = 13-cis-retinoate + NADH + 2 H(+). It catalyses the reaction 4-aminobutanal + NAD(+) + H2O = 4-aminobutanoate + NADH + 2 H(+). It carries out the reaction 3-deoxyglucosone + NAD(+) + H2O = 2-dehydro-3-deoxy-D-gluconate + NADH + 2 H(+). The catalysed reaction is (E)-4-hydroxynon-2-enal + NAD(+) + H2O = (E)-4-hydroxynon-2-enoate + NADH + 2 H(+). The enzyme catalyses malonaldehyde + NAD(+) + H2O = 3-oxopropanoate + NADH + 2 H(+). It catalyses the reaction hexanal + NAD(+) + H2O = hexanoate + NADH + 2 H(+). It carries out the reaction propanal + NAD(+) + H2O = propanoate + NADH + 2 H(+). The catalysed reaction is acetaldehyde + NAD(+) + H2O = acetate + NADH + 2 H(+). The enzyme catalyses benzaldehyde + NAD(+) + H2O = benzoate + NADH + 2 H(+). It participates in cofactor metabolism; retinol metabolism. The aminobutyraldehyde dehydrogenase activity is negatively regulated by ethanol in vivo. Its function is as follows. Cytosolic dehydrogenase that catalyzes the irreversible oxidation of a wide range of aldehydes to their corresponding carboxylic acid. Functions downstream of retinol dehydrogenases and catalyzes the oxidation of retinaldehyde into retinoic acid, the second step in the oxidation of retinol/vitamin A into retinoic acid. This pathway is crucial to control the levels of retinol and retinoic acid, two important molecules which excess can be teratogenic and cytotoxic. Also oxidizes aldehydes resulting from lipid peroxidation like (E)-4-hydroxynon-2-enal/HNE, malonaldehyde and hexanal that form protein adducts and are highly cytotoxic. By participating for instance to the clearance of (E)-4-hydroxynon-2-enal/HNE in the lens epithelium prevents the formation of HNE-protein adducts and lens opacification. Also functions downstream of fructosamine-3-kinase in the fructosamine degradation pathway by catalyzing the oxidation of 3-deoxyglucosone, the carbohydrate product of fructosamine 3-phosphate decomposition, which is itself a potent glycating agent that may react with lysine and arginine side-chains of proteins. Also has an aminobutyraldehyde dehydrogenase activity and is probably part of an alternative pathway for the biosynthesis of GABA/4-aminobutanoate in midbrain, thereby playing a role in GABAergic synaptic transmission. This Mus musculus (Mouse) protein is Aldehyde dehydrogenase 1A1.